We begin with the raw amino-acid sequence, 291 residues long: Insulin-like growth factor-binding protein 3 (291 aa).

The N-terminal stretch at 1-27 (MLRARPALWAAALTALTLLRGPPAARA) is a signal peptide. The IGF-binding stretch occupies residues 28–134 (GAGTMGAGPV…LRPYLLPSAS (107 aa)). The 84-residue stretch at 36 to 119 (PVVRCEPCDA…LDGRGLCANA (84 aa)) folds into the IGFBP N-terminal domain. Cystine bridges form between Cys40/Cys69, Cys43/Cys71, Cys51/Cys72, Cys60/Cys75, Cys83/Cys96, and Cys90/Cys116. N-linked (GlcNAc...) asparagine glycans are attached at residues Asn118 and Asn136. Disordered stretches follow at residues 132–162 (SASG…RVPV) and 177–211 (KGHA…TEYG). Residues 146 to 155 (MGSTENQAGP) are compositionally biased toward polar residues. Ser148 carries the phosphoserine modification. The span at 177 to 190 (KGHAKDSQRYKVDY) shows a compositional bias: basic and acidic residues. A compositionally biased stretch (polar residues) spans 191 to 202 (ESQSTDTQNFSS). Residue Asn199 is glycosylated (N-linked (GlcNAc...) asparagine). At Ser201 the chain carries Phosphoserine. Positions 210 to 285 (YGPCRREMED…DVKGKGDVHC (76 aa)) constitute a Thyroglobulin type-1 domain. 3 cysteine pairs are disulfide-bonded: Cys213/Cys240, Cys251/Cys262, and Cys264/Cys285.

In terms of assembly, interacts with XLKD1. Binds IGF2 more than IGF1. Forms a ternary complex of about 140 to 150 kDa with IGF1 or IGF2 and a 85 kDa glycoprotein (ALS). Interacts with humanin; humanin competes with importin KPNB1 for binding to IGFBP3, blocking IGFBP3 nuclear import and IGFBP3-mediated apoptosis. Interacts with TMEM219. Interacts with RXRA; this interaction modulates the transcriptional activity of RXRA. Interacts with LRP1; this interaction mediates cell growth inhibition independent of IGF1. Post-translationally, phosphorylated by FAM20C in the extracellular medium. Phosphorylated by CK2; resulting in decreased nuclear localization. As to expression, plasma; expressed by most tissues.

The protein localises to the secreted. It is found in the nucleus. In terms of biological role, multifunctional protein that plays a critical role in regulating the availability of IGFs such as IGF1 and IGF2 to their receptors and thereby regulates IGF-mediated cellular processes including proliferation, differentiation, and apoptosis in a cell-type specific manner. Also exhibits IGF-independent antiproliferative and apoptotic effects mediated by its receptor TMEM219/IGFBP-3R. Inhibits the positive effect of humanin on insulin sensitivity. Promotes testicular germ cell apoptosis. Acts via LRP-1/alpha2M receptor, also known as TGF-beta type V receptor, to mediate cell growth inhibition independent of IGF1. Mechanistically, induces serine-specific dephosphorylation of IRS1 or IRS2 upon ligation to its receptor, leading to the inhibitory cascade. In the nucleus, interacts with transcription factors such as retinoid X receptor-alpha/RXRA to regulate transcriptional signaling and apoptosis. The polypeptide is Insulin-like growth factor-binding protein 3 (IGFBP3) (Bos taurus (Bovine)).